We begin with the raw amino-acid sequence, 668 residues long: Probable metal-nicotianamine transporter YSL5 (668 aa).

Low complexity predominate over residues 1-11; the sequence is MPPPETSSAAA. The interval 1 to 22 is disordered; sequence MPPPETSSAAAPSPPSPDPLPP. The segment covering 12-22 has biased composition (pro residues); that stretch reads PSPPSPDPLPP. The next 14 membrane-spanning stretches (helical) occupy residues 27–47, 51–71, 102–122, 147–167, 209–229, 268–288, 315–335, 383–403, 410–430, 443–463, 501–521, 557–577, 595–615, and 633–653; these read LTLR…VVIH, LTVG…FFLA, CAIA…IFAM, LGWM…SIVM, LVKY…FSGV, IVNC…WPFI, IAIS…FLII, LAVS…PIIF, LVLV…YGMG, IALF…AGLA, IGVA…WTAF, LEIC…KDVV, FYIG…LFAW, and GLIC…ILGV.

The protein belongs to the YSL (TC 2.A.67.2) family. In terms of tissue distribution, expressed in roots.

It localises to the membrane. Its function is as follows. May be involved in the transport of nicotianamine-chelated metals. This chain is Probable metal-nicotianamine transporter YSL5 (YSL5), found in Oryza sativa subsp. japonica (Rice).